The primary structure comprises 294 residues: Lipoyl synthase (294 aa).

The [4Fe-4S] cluster site is built by C41, C46, C52, C67, C71, C74, and S281. One can recognise a Radical SAM core domain in the interval 53–270 (FNNGTATFMI…KLESLAMGFT (218 aa)).

This sequence belongs to the radical SAM superfamily. Lipoyl synthase family. [4Fe-4S] cluster serves as cofactor.

The protein resides in the cytoplasm. It carries out the reaction [[Fe-S] cluster scaffold protein carrying a second [4Fe-4S](2+) cluster] + N(6)-octanoyl-L-lysyl-[protein] + 2 oxidized [2Fe-2S]-[ferredoxin] + 2 S-adenosyl-L-methionine + 4 H(+) = [[Fe-S] cluster scaffold protein] + N(6)-[(R)-dihydrolipoyl]-L-lysyl-[protein] + 4 Fe(3+) + 2 hydrogen sulfide + 2 5'-deoxyadenosine + 2 L-methionine + 2 reduced [2Fe-2S]-[ferredoxin]. It participates in protein modification; protein lipoylation via endogenous pathway; protein N(6)-(lipoyl)lysine from octanoyl-[acyl-carrier-protein]: step 2/2. Functionally, catalyzes the radical-mediated insertion of two sulfur atoms into the C-6 and C-8 positions of the octanoyl moiety bound to the lipoyl domains of lipoate-dependent enzymes, thereby converting the octanoylated domains into lipoylated derivatives. This is Lipoyl synthase from Baumannia cicadellinicola subsp. Homalodisca coagulata.